A 73-amino-acid chain; its full sequence is Large ribosomal subunit protein bL28 (73 aa).

The protein belongs to the bacterial ribosomal protein bL28 family.

This is Large ribosomal subunit protein bL28 from Fervidobacterium nodosum (strain ATCC 35602 / DSM 5306 / Rt17-B1).